The sequence spans 629 residues: MDFPSRFDVIVVGGGHAGTEAALAAARMGVKTLLLSHNIETLGQMSCNPAIGGIGKSHLVKEIDALDGAMALATDQAGIQFRTLNSRKGPAVRATRAQADRILYKAAIRHKLENQENLWLFQQSAEDLIVENGAARGVITQTGIRFNSKTVVLTAGTFLGGVIHIGLENHSGGRAGDPPSIGLAQKLRALPFRVDRLKTGTPPRIDARSVDFSQMQAQPGDDIDPVMSYMGNRAMHPRQIECFITHTNERTHDIIRAGMDRSPMYTGVIEGVGPRYCPSIEDKIVRFADKNSHQIFIEPEGLTTHELYPNGISTSLPFDVQIELVRSMKGMENAHIIRPGYAIEYDYFNPQDLKYSLETKHMPGLFFAGQINGTTGYEEAGAQGLLAGLNAALLAQEKDAWTPRRDEAYLGVLVDDLISMGTKEPYRMFTSRAEYRLILREDNADMRLTEKGRELGLVSDERWAAFCKKREAIELETQRLRSSWIVPNTPEADSINPKLETPITHEYSLLDLLKRPNIVYSDIANLKNGLDEPVDEQVSEQVQIAVKYAGYISRQAEDIERLRRQENTELPDDLDYSKMEGLSNEIKQKLTQLRPATLAAASRIQGVTPAAVSLLLIHLKKRAIARKSA.

Position 13-18 (13-18 (GGGHAG)) interacts with FAD. Position 273 to 287 (273 to 287 (GPRYCPSIEDKIVRF)) interacts with NAD(+).

Belongs to the MnmG family. As to quaternary structure, homodimer. Heterotetramer of two MnmE and two MnmG subunits. FAD is required as a cofactor.

The protein resides in the cytoplasm. NAD-binding protein involved in the addition of a carboxymethylaminomethyl (cmnm) group at the wobble position (U34) of certain tRNAs, forming tRNA-cmnm(5)s(2)U34. The chain is tRNA uridine 5-carboxymethylaminomethyl modification enzyme MnmG from Marinomonas sp. (strain MWYL1).